A 308-amino-acid polypeptide reads, in one-letter code: Glutaminase (308 aa).

7 residues coordinate substrate: Ser66, Asn117, Glu161, Asn168, Tyr192, Tyr244, and Val262.

The protein belongs to the glutaminase family. In terms of assembly, homotetramer.

It catalyses the reaction L-glutamine + H2O = L-glutamate + NH4(+). In Yersinia pestis bv. Antiqua (strain Nepal516), this protein is Glutaminase.